We begin with the raw amino-acid sequence, 1059 residues long: Carbamoyl phosphate synthase large chain (1059 aa).

The interval 1-401 is carboxyphosphate synthetic domain; the sequence is MPKRKDIQKI…SLLKACRSLE (401 aa). ATP-binding residues include Arg129, Arg169, Gly175, Gly176, Arg208, Ile210, Glu215, Gly241, Ile242, His243, Gln284, and Glu298. Positions 133 to 327 constitute an ATP-grasp 1 domain; that stretch reads KQLMEELGQP…IAKLAAKIAV (195 aa). Residues Gln284, Glu298, and Asn300 each contribute to the Mg(2+) site. Mn(2+)-binding residues include Gln284, Glu298, and Asn300. Positions 402–546 are oligomerization domain; it reads VCVDHNELPA…YSTYGFENES (145 aa). The segment at 547-929 is carbamoyl phosphate synthetic domain; the sequence is VKSSKESVLV…ALYKAFEASY (383 aa). Residues 671-861 enclose the ATP-grasp 2 domain; that stretch reads EQALKELDIP…MAQVATRLIL (191 aa). ATP-binding residues include Arg707, Ser746, Ile748, Glu752, Gly777, Val778, His779, Ser780, Gln820, and Glu832. Positions 820, 832, and 834 each coordinate Mg(2+). Mn(2+) contacts are provided by Gln820, Glu832, and Asn834. Residues 930 to 1059 form the MGS-like domain; it reads LHLPNFGNIV…ESRSFTTEAI (130 aa). Positions 930–1059 are allosteric domain; it reads LHLPNFGNIV…ESRSFTTEAI (130 aa).

Belongs to the CarB family. In terms of assembly, composed of two chains; the small (or glutamine) chain promotes the hydrolysis of glutamine to ammonia, which is used by the large (or ammonia) chain to synthesize carbamoyl phosphate. Tetramer of heterodimers (alpha,beta)4. It depends on Mg(2+) as a cofactor. Mn(2+) is required as a cofactor.

It carries out the reaction hydrogencarbonate + L-glutamine + 2 ATP + H2O = carbamoyl phosphate + L-glutamate + 2 ADP + phosphate + 2 H(+). The catalysed reaction is hydrogencarbonate + NH4(+) + 2 ATP = carbamoyl phosphate + 2 ADP + phosphate + 2 H(+). The protein operates within amino-acid biosynthesis; L-arginine biosynthesis; carbamoyl phosphate from bicarbonate: step 1/1. It functions in the pathway pyrimidine metabolism; UMP biosynthesis via de novo pathway; (S)-dihydroorotate from bicarbonate: step 1/3. Large subunit of the glutamine-dependent carbamoyl phosphate synthetase (CPSase). CPSase catalyzes the formation of carbamoyl phosphate from the ammonia moiety of glutamine, carbonate, and phosphate donated by ATP, constituting the first step of 2 biosynthetic pathways, one leading to arginine and/or urea and the other to pyrimidine nucleotides. The large subunit (synthetase) binds the substrates ammonia (free or transferred from glutamine from the small subunit), hydrogencarbonate and ATP and carries out an ATP-coupled ligase reaction, activating hydrogencarbonate by forming carboxy phosphate which reacts with ammonia to form carbamoyl phosphate. This is Carbamoyl phosphate synthase large chain from Streptococcus sanguinis (strain SK36).